A 40-amino-acid polypeptide reads, in one-letter code: Photosystem II reaction center protein L (40 aa).

Residues 19–39 (SLFLGLLLVFVLGILFSSYFF) traverse the membrane as a helical segment.

It belongs to the PsbL family. As to quaternary structure, PSII is composed of 1 copy each of membrane proteins PsbA, PsbB, PsbC, PsbD, PsbE, PsbF, PsbH, PsbI, PsbJ, PsbK, PsbL, PsbM, PsbT, PsbX, PsbY, PsbZ, Psb30/Ycf12, peripheral proteins PsbO, CyanoQ (PsbQ), PsbU, PsbV and a large number of cofactors. It forms dimeric complexes.

It localises to the cellular thylakoid membrane. One of the components of the core complex of photosystem II (PSII). PSII is a light-driven water:plastoquinone oxidoreductase that uses light energy to abstract electrons from H(2)O, generating O(2) and a proton gradient subsequently used for ATP formation. It consists of a core antenna complex that captures photons, and an electron transfer chain that converts photonic excitation into a charge separation. This subunit is found at the monomer-monomer interface and is required for correct PSII assembly and/or dimerization. This is Photosystem II reaction center protein L from Synechococcus elongatus (strain ATCC 33912 / PCC 7942 / FACHB-805) (Anacystis nidulans R2).